We begin with the raw amino-acid sequence, 729 residues long: Polyribonucleotide nucleotidyltransferase (729 aa).

2 residues coordinate Mg(2+): aspartate 485 and aspartate 491. Residues 552-611 (PRITTMKVAEDKIRTIIGKGGATIKGLIESTGVSIDIDDSGVIQLFSPDKMALEEAQKQI) form the KH domain. In terms of domain architecture, S1 motif spans 621–689 (GQTYQGKVSK…KQGRVKLEWK (69 aa)). Positions 710–729 (TMEEQSEEINSGNKISEEEE) are disordered.

This sequence belongs to the polyribonucleotide nucleotidyltransferase family. As to quaternary structure, component of the RNA degradosome, which is a multiprotein complex involved in RNA processing and mRNA degradation. Requires Mg(2+) as cofactor.

It is found in the cytoplasm. The enzyme catalyses RNA(n+1) + phosphate = RNA(n) + a ribonucleoside 5'-diphosphate. Functionally, involved in mRNA degradation. Catalyzes the phosphorolysis of single-stranded polyribonucleotides processively in the 3'- to 5'-direction. This Legionella pneumophila (strain Paris) protein is Polyribonucleotide nucleotidyltransferase.